We begin with the raw amino-acid sequence, 89 residues long: Exodeoxyribonuclease 7 small subunit (89 aa).

A disordered region spans residues 1–22 (MRKKSSSNKEETALHPPPENFE).

It belongs to the XseB family. As to quaternary structure, heterooligomer composed of large and small subunits.

The protein localises to the cytoplasm. The catalysed reaction is Exonucleolytic cleavage in either 5'- to 3'- or 3'- to 5'-direction to yield nucleoside 5'-phosphates.. Functionally, bidirectionally degrades single-stranded DNA into large acid-insoluble oligonucleotides, which are then degraded further into small acid-soluble oligonucleotides. The chain is Exodeoxyribonuclease 7 small subunit from Nitrosomonas europaea (strain ATCC 19718 / CIP 103999 / KCTC 2705 / NBRC 14298).